The sequence spans 338 residues: Large ribosomal subunit protein uL10 (338 aa).

Residues 298 to 338 (TVQQSQSQQPAAEEKKEEKKEEEKKGPSEEEIASGLASLFG) form a disordered region. The segment covering 309–325 (AEEKKEEKKEEEKKGPS) has biased composition (basic and acidic residues).

It belongs to the universal ribosomal protein uL10 family. In terms of assembly, part of the 50S ribosomal subunit. Forms part of the ribosomal stalk which helps the ribosome interact with GTP-bound translation factors. Forms a heptameric L10(L12)2(L12)2(L12)2 complex, where L10 forms an elongated spine to which the L12 dimers bind in a sequential fashion.

In terms of biological role, forms part of the ribosomal stalk, playing a central role in the interaction of the ribosome with GTP-bound translation factors. This chain is Large ribosomal subunit protein uL10, found in Saccharolobus solfataricus (strain ATCC 35092 / DSM 1617 / JCM 11322 / P2) (Sulfolobus solfataricus).